The following is a 260-amino-acid chain: Triosephosphate isomerase (260 aa).

11-13 (NWK) provides a ligand contact to substrate. Catalysis depends on histidine 103, which acts as the Electrophile. The Proton acceptor role is filled by glutamate 175. Substrate is bound by residues glycine 181, serine 220, and 241 to 242 (GG).

This sequence belongs to the triosephosphate isomerase family. Homodimer.

The protein resides in the cytoplasm. It carries out the reaction D-glyceraldehyde 3-phosphate = dihydroxyacetone phosphate. The protein operates within carbohydrate biosynthesis; gluconeogenesis. It participates in carbohydrate degradation; glycolysis; D-glyceraldehyde 3-phosphate from glycerone phosphate: step 1/1. Functionally, involved in the gluconeogenesis. Catalyzes stereospecifically the conversion of dihydroxyacetone phosphate (DHAP) to D-glyceraldehyde-3-phosphate (G3P). This is Triosephosphate isomerase from Shewanella sp. (strain W3-18-1).